Consider the following 1358-residue polypeptide: DNA-directed RNA polymerase subunit beta (1358 aa).

It belongs to the RNA polymerase beta chain family. As to quaternary structure, the RNAP catalytic core consists of 2 alpha, 1 beta, 1 beta' and 1 omega subunit. When a sigma factor is associated with the core the holoenzyme is formed, which can initiate transcription.

It carries out the reaction RNA(n) + a ribonucleoside 5'-triphosphate = RNA(n+1) + diphosphate. Functionally, DNA-dependent RNA polymerase catalyzes the transcription of DNA into RNA using the four ribonucleoside triphosphates as substrates. The protein is DNA-directed RNA polymerase subunit beta of Xanthobacter autotrophicus (strain ATCC BAA-1158 / Py2).